Reading from the N-terminus, the 1041-residue chain is MPRSRDEDDELDGDYEALDLEEEEEEDEEEEEERGRGGGGSRRKRGRSNFIDDYAEEDSQEEDDDDEDYGSSRGGKGAASKRKKPSASIFLDREAHQVDDEDEEEEDEAEDDFIVDNGTDLPDERGDRRYERRFLPRDENDEDVEDLERRIQERFSSRHHEEYDEEATEVEQQALLPSVRDPKLWMVKCAIGREREVAVCLMQKFIDRGADLQIRSVVALDHLKNFIYVEADKEAHVKEAIKGMRNIYANQKILLVPIREMTDVLSVESKAIDLSRDTWVRMKIGTYKGDLAKVVDVDNVRQRVTVKLIPRIDLQALASKLDGREVSKKKAFVPPPRFMNIDEARELHIRVERRRDHMTGDYFENIGGMLFKDGFHYKQVSLKSITVQNVTPTFDELEKFNKPSENGEGDFGGLSTLFANRKKGHFMKGDAVIVIKGDLKNLKGWVEKVDEENVLIRSEVKGLPDPLAVNERELCKYFEPGNHVKVVSGTHEGATGMVVKVDQHVLIILSDTTKEHVRVFADHVVESSEVTTGVTKIGDYELHDLVLLDNLSFGVIIRLENEAFQVLKGVPDRPEVALVKLREIKCKLEKKINVQDRYKNVIAVKDDVRVIEGPSKGKQGPVKHIYKGVLFIYDRHHLEHAGFICAKCTSCIVVGGSRSGANRNGGDSLSRYGNFKAPAPVPSSPGRFQRGRGGGYNNSGGRHGGGRGRGDDSLLGTTVKIRLGPFKGYRGPVVEVKGNSVRVELEMKIVTVDRGAISDNVATTPFRDTSRYSMGSETPMHPSRTPLHPYMTPMRDSGATPIHDGMRTPMRDRAWNPYTPMSPPRDNWEDGNPGSWGTSPQYQPGSPPSRAYEAPTPGSGWASTPGGSYSDAGTPRDHGSAYANAPSPYLPSTPGQPMTPSSASYLPGTPGGQPMTPGTGLDVMSPVIGGDAEAWFMPDILVDIHKAGEDTDVGVIRDVSDGTCKVSLGSSGEGDTIMALPSELEIIPPRKSDRVKIVGGQYRGSTGKLIGIDGSDGIVKIDDNLDVKILDLALLAKFVQP.

The interval 1-133 (MPRSRDEDDE…ERGDRRYERR (133 aa)) is disordered. Composition is skewed to acidic residues over residues 7 to 32 (EDDE…EEEE), 53 to 69 (DYAE…DEDY), and 99 to 114 (DDED…DDFI). The residue at position 59 (Ser59) is a Phosphoserine. Residues 122 to 133 (PDERGDRRYERR) are compositionally biased toward basic and acidic residues. KOW domains are found at residues 273 to 300 (DLSR…VDNV), 425 to 452 (HFMK…VDEE), 477 to 504 (YFEP…VDQH), and 601 to 628 (VIAV…IYKG). 2 disordered regions span residues 662–713 (NRNG…GDDS) and 768–921 (DTSR…GTGL). Gly residues predominate over residues 691–703 (GRGGGYNNSGGRH). A KOW 5 domain is found at 712-739 (DSLLGTTVKIRLGPFKGYRGPVVEVKGN). Over residues 804 to 814 (DGMRTPMRDRA) the composition is skewed to basic and acidic residues. 2 stretches are compositionally biased toward polar residues: residues 835–844 (SWGTSPQYQP) and 893–904 (TPGQPMTPSSAS). Residues 988 to 1015 (PPRKSDRVKIVGGQYRGSTGKLIGIDGS) form the KOW 6 domain.

Belongs to the SPT5 family.

The protein resides in the nucleus. In terms of biological role, may regulate transcription elongation by RNA polymerase II. May enhance transcriptional pausing at sites proximal to the promoter, which may in turn facilitate the assembly of an elongation competent RNA polymerase II complex. The protein is Putative transcription elongation factor SPT5 homolog 1 of Arabidopsis thaliana (Mouse-ear cress).